The sequence spans 216 residues: FMN-dependent NADH:quinone oxidoreductase 3 (216 aa).

FMN is bound by residues Ser10 and 16–18 (SAS).

The protein belongs to the azoreductase type 1 family. As to quaternary structure, homodimer. It depends on FMN as a cofactor.

It carries out the reaction 2 a quinone + NADH + H(+) = 2 a 1,4-benzosemiquinone + NAD(+). The catalysed reaction is N,N-dimethyl-1,4-phenylenediamine + anthranilate + 2 NAD(+) = 2-(4-dimethylaminophenyl)diazenylbenzoate + 2 NADH + 2 H(+). Quinone reductase that provides resistance to thiol-specific stress caused by electrophilic quinones. In terms of biological role, also exhibits azoreductase activity. Catalyzes the reductive cleavage of the azo bond in aromatic azo compounds to the corresponding amines. This is FMN-dependent NADH:quinone oxidoreductase 3 from Pseudomonas fluorescens (strain ATCC BAA-477 / NRRL B-23932 / Pf-5).